Consider the following 64-residue polypeptide: Probable cytochrome c oxidase subunit 5C-1 (64 aa).

The helical transmembrane segment at 15–34 threads the bilayer; it reads SVVKELFIGLALGLAAGGLW.

This sequence belongs to the cytochrome c oxidase subunit 5C family.

The protein localises to the mitochondrion inner membrane. Its function is as follows. This protein is one of the nuclear-coded polypeptide chains of cytochrome c oxidase, the terminal oxidase in mitochondrial electron transport. This Arabidopsis thaliana (Mouse-ear cress) protein is Probable cytochrome c oxidase subunit 5C-1.